Consider the following 408-residue polypeptide: E3 ubiquitin-protein ligase At1g12760 (408 aa).

The tract at residues 1–52 (MSTETTTGNSSLIPASSSSSSSDAIDPAPLLFNGDDNEGNNGGGGGERRSVR) is disordered. Residues 10-34 (SSLIPASSSSSSSDAIDPAPLLFNG) are compositionally biased toward low complexity. 2 helical membrane-spanning segments follow: residues 100 to 120 (VVVL…AILV) and 133 to 153 (VWLL…CVEY). The segment at 160 to 195 (RTNRTTTTTPPRSRSSSSSSSSSSLEEEALGSRRNS) is disordered. Low complexity predominate over residues 163–183 (RTTTTTPPRSRSSSSSSSSSS). Transmembrane regions (helical) follow at residues 219 to 239 (ANTM…SAGG), 254 to 274 (IVFL…ACVI), and 275 to 295 (GIAV…VADQ). Residues 353-394 (CCICLSAYEDGTELRELPCGHHFHCSCVDKWLYINATCPLCK) form an RING-type; atypical zinc finger.

The protein resides in the membrane. The enzyme catalyses S-ubiquitinyl-[E2 ubiquitin-conjugating enzyme]-L-cysteine + [acceptor protein]-L-lysine = [E2 ubiquitin-conjugating enzyme]-L-cysteine + N(6)-ubiquitinyl-[acceptor protein]-L-lysine.. The protein operates within protein modification; protein ubiquitination. In terms of biological role, mediates E2-dependent protein ubiquitination in vitro. This is E3 ubiquitin-protein ligase At1g12760 from Arabidopsis thaliana (Mouse-ear cress).